The primary structure comprises 324 residues: Carbonic anhydrase 15 (324 aa).

A signal peptide spans 1–18; the sequence is MWALDFLLSFLLIQLAAQ. The Alpha-carbonic anhydrase domain maps to 23–293; the sequence is GTWCYDSQDP…LGGRRISASP (271 aa). Catalysis depends on histidine 90, which acts as the Proton acceptor. 3 residues coordinate Zn(2+): histidine 122, histidine 124, and histidine 147. Tyrosine 155 is a catalytic residue. N-linked (GlcNAc...) asparagine glycosylation is found at asparagine 184, asparagine 194, and asparagine 203. Residue 231–232 participates in substrate binding; sequence TT. Residues 269–290 are disordered; it reads LHPRPLTSNFRPQQPLGGRRIS.

The protein belongs to the alpha-carbonic anhydrase family. It depends on Zn(2+) as a cofactor.

The protein localises to the secreted. The enzyme catalyses hydrogencarbonate + H(+) = CO2 + H2O. With respect to regulation, repressed by coumarins. Reversible hydration of carbon dioxide. This Mus musculus (Mouse) protein is Carbonic anhydrase 15 (Ca15).